The chain runs to 208 residues: Small ribosomal subunit protein uS4 (208 aa).

Residues 98-158 (GRLDNVVYRM…EKSKKQARIK (61 aa)) enclose the S4 RNA-binding domain.

This sequence belongs to the universal ribosomal protein uS4 family. As to quaternary structure, part of the 30S ribosomal subunit. Contacts protein S5. The interaction surface between S4 and S5 is involved in control of translational fidelity.

One of the primary rRNA binding proteins, it binds directly to 16S rRNA where it nucleates assembly of the body of the 30S subunit. Functionally, with S5 and S12 plays an important role in translational accuracy. The protein is Small ribosomal subunit protein uS4 of Haemophilus ducreyi (strain 35000HP / ATCC 700724).